A 178-amino-acid chain; its full sequence is Inner membrane-spanning protein YciB (178 aa).

Transmembrane regions (helical) follow at residues 10-30, 47-67, 76-96, 121-141, and 151-171; these read IVLF…AVLM, LQTM…LTLA, WKPT…LWAL, WAWI…VLHW, and LWGY…IAPH.

This sequence belongs to the YciB family.

It is found in the cell inner membrane. Its function is as follows. Plays a role in cell envelope biogenesis, maintenance of cell envelope integrity and membrane homeostasis. This is Inner membrane-spanning protein YciB from Verminephrobacter eiseniae (strain EF01-2).